The following is a 702-amino-acid chain: Pseudouridylate synthase PUS7L (702 aa).

Residue Ser-79 is modified to Phosphoserine. A disordered region spans residues Asn-84–Ser-116. Positions Asp-96 to Asn-109 are enriched in basic and acidic residues. The active-site Nucleophile is Asp-339. The region spanning Gly-424–His-646 is the TRUD domain.

Belongs to the pseudouridine synthase TruD family.

The enzyme catalyses a uridine in mRNA = a pseudouridine in mRNA. Its function is as follows. Pseudouridine synthase that catalyzes pseudouridylation of mRNAs. The polypeptide is Pseudouridylate synthase PUS7L (Mus musculus (Mouse)).